The sequence spans 237 residues: MEIIPAIDMQGGRCVRLYQGDFQRVTVYDDDPVAVAHRWVAQGAPRLHLVDLDGARSGHPVHTDIIRAIVQSVDAPVQLGGGLRSIAAVERALELGVQRVILGTAAVHDPELIRQLVQQFGDAIAIAVDARNDMAATAGWTETAAISAIDLVERMAALGVRRVIYTDIARDGTLSEPNIATTRALVRPGGPAIIASGGISTIDHLRRLAEVGVEGAIVGRALYTGDLSLSDALAAVQ.

The Proton acceptor role is filled by D8. D129 (proton donor) is an active-site residue.

The protein belongs to the HisA/HisF family.

The protein localises to the cytoplasm. It catalyses the reaction 1-(5-phospho-beta-D-ribosyl)-5-[(5-phospho-beta-D-ribosylamino)methylideneamino]imidazole-4-carboxamide = 5-[(5-phospho-1-deoxy-D-ribulos-1-ylimino)methylamino]-1-(5-phospho-beta-D-ribosyl)imidazole-4-carboxamide. The protein operates within amino-acid biosynthesis; L-histidine biosynthesis; L-histidine from 5-phospho-alpha-D-ribose 1-diphosphate: step 4/9. The sequence is that of 1-(5-phosphoribosyl)-5-[(5-phosphoribosylamino)methylideneamino] imidazole-4-carboxamide isomerase from Roseiflexus sp. (strain RS-1).